The chain runs to 156 residues: ATP synthase subunit b (156 aa).

The helical transmembrane segment at 5–25 (LTLIGQAIAFAFFVAFCMKFV) threads the bilayer.

The protein belongs to the ATPase B chain family. F-type ATPases have 2 components, F(1) - the catalytic core - and F(0) - the membrane proton channel. F(1) has five subunits: alpha(3), beta(3), gamma(1), delta(1), epsilon(1). F(0) has three main subunits: a(1), b(2) and c(10-14). The alpha and beta chains form an alternating ring which encloses part of the gamma chain. F(1) is attached to F(0) by a central stalk formed by the gamma and epsilon chains, while a peripheral stalk is formed by the delta and b chains.

The protein localises to the cell inner membrane. F(1)F(0) ATP synthase produces ATP from ADP in the presence of a proton or sodium gradient. F-type ATPases consist of two structural domains, F(1) containing the extramembraneous catalytic core and F(0) containing the membrane proton channel, linked together by a central stalk and a peripheral stalk. During catalysis, ATP synthesis in the catalytic domain of F(1) is coupled via a rotary mechanism of the central stalk subunits to proton translocation. In terms of biological role, component of the F(0) channel, it forms part of the peripheral stalk, linking F(1) to F(0). The sequence is that of ATP synthase subunit b from Acinetobacter baumannii (strain AYE).